We begin with the raw amino-acid sequence, 61 residues long: Large ribosomal subunit protein uL30 (61 aa).

The protein belongs to the universal ribosomal protein uL30 family. In terms of assembly, part of the 50S ribosomal subunit.

In Treponema denticola (strain ATCC 35405 / DSM 14222 / CIP 103919 / JCM 8153 / KCTC 15104), this protein is Large ribosomal subunit protein uL30.